A 375-amino-acid polypeptide reads, in one-letter code: Histidine biosynthesis bifunctional protein HisB (375 aa).

The interval methionine 1–proline 168 is histidinol-phosphatase. Aspartate 8 (nucleophile) is an active-site residue. The Mg(2+) site is built by aspartate 8, aspartate 10, and aspartate 128. Aspartate 10 functions as the Proton donor in the catalytic mechanism. Residues arginine 169 to leucine 375 form an imidazoleglycerol-phosphate dehydratase region.

The protein in the N-terminal section; belongs to the histidinol-phosphatase family. It in the C-terminal section; belongs to the imidazoleglycerol-phosphate dehydratase family. Mg(2+) serves as cofactor.

It is found in the cytoplasm. The enzyme catalyses D-erythro-1-(imidazol-4-yl)glycerol 3-phosphate = 3-(imidazol-4-yl)-2-oxopropyl phosphate + H2O. The catalysed reaction is L-histidinol phosphate + H2O = L-histidinol + phosphate. The protein operates within amino-acid biosynthesis; L-histidine biosynthesis; L-histidine from 5-phospho-alpha-D-ribose 1-diphosphate: step 6/9. Its pathway is amino-acid biosynthesis; L-histidine biosynthesis; L-histidine from 5-phospho-alpha-D-ribose 1-diphosphate: step 8/9. The polypeptide is Histidine biosynthesis bifunctional protein HisB (Xanthomonas campestris pv. campestris (strain 8004)).